The sequence spans 428 residues: Protein clpf-1 (428 aa).

Residues glutamate 16 and arginine 56 each coordinate ATP. A disordered region spans residues 99 to 118; sequence KKREEQAVSNSSKPKGPRLL. 124 to 129 is a binding site for ATP; the sequence is DVGKTT.

It belongs to the Clp1 family. Clp1 subfamily.

The protein resides in the nucleus. Functionally, required for endonucleolytic cleavage during polyadenylation-dependent pre-mRNA 3'-end formation. This chain is Protein clpf-1, found in Caenorhabditis briggsae.